Consider the following 463-residue polypeptide: Zinc finger protein interacting with ribonucleoprotein K (463 aa).

Residues 14 to 89 (VTFQDVAICF…PKTNLCEKCV (76 aa)) form the KRAB domain. Disordered stretches follow at residues 106 to 128 (HSTE…KPLE) and 171 to 211 (KYRK…TSNG). A compositionally biased stretch (basic and acidic residues) spans 174–191 (KSTEGRKETSHESDKSEE). Polar residues predominate over residues 192–201 (CQSLSSQKQT). 9 C2H2-type zinc fingers span residues 215 to 237 (YECS…QRVH), 243 to 265 (WECR…RRIH), 271 to 293 (YECS…QKTH), 299 to 321 (YECS…KRVH), 327 to 349 (YKCS…RRIH), 355 to 377 (YECR…QRVH), 383 to 405 (YKCS…RRIH), 411 to 433 (YECS…QVVH), and 439 to 461 (YECD…QKCH).

The protein belongs to the krueppel C2H2-type zinc-finger protein family. As to quaternary structure, interacts with HNRPK. As to expression, expressed in ovary and liver, and at lower levels in brain and muscle.

It is found in the nucleus. May be a transcriptional repressor. The protein is Zinc finger protein interacting with ribonucleoprotein K (Zik1) of Mus musculus (Mouse).